We begin with the raw amino-acid sequence, 321 residues long: Glucokinase (321 aa).

Position 8–13 (G8–T13) interacts with ATP.

It belongs to the bacterial glucokinase family.

It is found in the cytoplasm. The catalysed reaction is D-glucose + ATP = D-glucose 6-phosphate + ADP + H(+). The sequence is that of Glucokinase from Klebsiella pneumoniae subsp. pneumoniae (strain ATCC 700721 / MGH 78578).